Consider the following 574-residue polypeptide: 2-succinyl-5-enolpyruvyl-6-hydroxy-3-cyclohexene-1-carboxylate synthase (574 aa).

This sequence belongs to the TPP enzyme family. MenD subfamily. In terms of assembly, homodimer. Mg(2+) is required as a cofactor. Mn(2+) serves as cofactor. Requires thiamine diphosphate as cofactor.

It catalyses the reaction isochorismate + 2-oxoglutarate + H(+) = 5-enolpyruvoyl-6-hydroxy-2-succinyl-cyclohex-3-ene-1-carboxylate + CO2. Its pathway is quinol/quinone metabolism; 1,4-dihydroxy-2-naphthoate biosynthesis; 1,4-dihydroxy-2-naphthoate from chorismate: step 2/7. The protein operates within quinol/quinone metabolism; menaquinone biosynthesis. Catalyzes the thiamine diphosphate-dependent decarboxylation of 2-oxoglutarate and the subsequent addition of the resulting succinic semialdehyde-thiamine pyrophosphate anion to isochorismate to yield 2-succinyl-5-enolpyruvyl-6-hydroxy-3-cyclohexene-1-carboxylate (SEPHCHC). This is 2-succinyl-5-enolpyruvyl-6-hydroxy-3-cyclohexene-1-carboxylate synthase from Vibrio atlanticus (strain LGP32) (Vibrio splendidus (strain Mel32)).